The primary structure comprises 663 residues: Shugoshin 1 (663 aa).

Coiled-coil stretches lie at residues 8–29 (KQAF…RIKK) and 110–132 (DTAE…NLLE). 3 disordered regions span residues 207 to 250 (RNTA…MNKN), 278 to 401 (EHTV…LNSG), and 417 to 478 (FRQN…ARKN). 4 stretches are compositionally biased toward basic and acidic residues: residues 231-242 (RLEECNNEDKTE), 280-304 (TVVE…REID), 339-358 (KNKE…KAER), and 366-394 (KPWE…KEKM). The span at 427-437 (NESSLEISSSE) shows a compositional bias: low complexity. Residues 443-453 (SLYKPYKDKSK) are compositionally biased toward basic and acidic residues.

It belongs to the shugoshin family. Binds microtubules. Ubiquitinated by the anaphase promoting complex (APC) at the onset of anaphase, conducting to its degradation.

It is found in the nucleus. The protein localises to the chromosome. Its subcellular location is the centromere. The protein resides in the kinetochore. It localises to the nucleus speckle. In terms of biological role, plays a central role in chromosome cohesion during mitosis by preventing premature dissociation of cohesin complex from centromeres after prophase, when most of cohesin complex dissociates from chromosomes arms. May act by preventing phosphorylation of the stag2 subunit of cohesin complex at the centromere, ensuring cohesin persistence at centromere until cohesin cleavage by espl1/separase at anaphase. May regulate kinetochore microtubule stability in mitosis, possibly to sense tension on mitotic chromosomes. In Xenopus laevis (African clawed frog), this protein is Shugoshin 1.